The chain runs to 474 residues: Glutamate--tRNA ligase (474 aa).

Residues 18 to 28 carry the 'HIGH' region motif; sequence PSPTGFLHIGG. The 'KMSKS' region motif lies at 244-248; that stretch reads KLSKR. An ATP-binding site is contributed by Lys247.

The protein belongs to the class-I aminoacyl-tRNA synthetase family. Glutamate--tRNA ligase type 1 subfamily. As to quaternary structure, monomer.

The protein localises to the cytoplasm. It carries out the reaction tRNA(Glu) + L-glutamate + ATP = L-glutamyl-tRNA(Glu) + AMP + diphosphate. Its function is as follows. Catalyzes the attachment of glutamate to tRNA(Glu) in a two-step reaction: glutamate is first activated by ATP to form Glu-AMP and then transferred to the acceptor end of tRNA(Glu). This is Glutamate--tRNA ligase from Caulobacter sp. (strain K31).